A 509-amino-acid polypeptide reads, in one-letter code: Protein MAIN-LIKE 1 (509 aa).

Positions 477–509 (GYGKRRRRNEHTPTPNNGGGNDISSLLLQKEDS) are disordered. The segment covering 488–503 (TPTPNNGGGNDISSLL) has biased composition (polar residues).

In terms of tissue distribution, expressed in root tips, the shoot apical meristem (SAM), leaves, mature flowers and embryos.

It localises to the nucleus. Functionally, acts as an important factor for cell fate determination and maintenance throughout plant development. Required for the organization of the root apical meristem (RAM) and the shoot apical meristem (SAM). Required to maintain genome stability and cell division activity in meristematic cells. The chain is Protein MAIN-LIKE 1 from Arabidopsis thaliana (Mouse-ear cress).